We begin with the raw amino-acid sequence, 260 residues long: Hydroxyacylglutathione hydrolase (260 aa).

Residues histidine 61, histidine 63, aspartate 65, histidine 66, histidine 119, aspartate 138, and histidine 176 each coordinate Zn(2+).

This sequence belongs to the metallo-beta-lactamase superfamily. Glyoxalase II family. As to quaternary structure, monomer. Zn(2+) serves as cofactor.

It catalyses the reaction an S-(2-hydroxyacyl)glutathione + H2O = a 2-hydroxy carboxylate + glutathione + H(+). It participates in secondary metabolite metabolism; methylglyoxal degradation; (R)-lactate from methylglyoxal: step 2/2. In terms of biological role, thiolesterase that catalyzes the hydrolysis of S-D-lactoyl-glutathione to form glutathione and D-lactic acid. The protein is Hydroxyacylglutathione hydrolase of Brucella suis (strain ATCC 23445 / NCTC 10510).